Reading from the N-terminus, the 326-residue chain is ELAV-like protein 1 (326 aa).

RRM domains lie at 20 to 98 (TNLI…VARP), 106 to 186 (ANLY…FAAN), and 244 to 322 (WCIF…FKTS).

The protein belongs to the RRM elav family. As to quaternary structure, interacts (via RRM3) with cirbp. Unable to form oligomers. Part of a ribonucleoprotein (RNP) complex, at least composed of elavl1/elrA and/or elavl2/elrB, igf2bp3/vg1RBP, ddx6/Xp54, ybx2/frgy2, lsm14b/rap55b and, in a subset of RNP complexes, stau1/staufen.

It localises to the cytoplasm. The protein localises to the cell cortex. In terms of biological role, RNA-binding protein that binds to the 3'-UTR region of mRNAs and increases their stability. Involved in embryonic stem cells (ESCs) differentiation: preferentially binds mRNAs that are not methylated by N6-methyladenosine (m6A), stabilizing them, promoting ESCs differentiation. Binds to poly-U elements and AU-rich elements (AREs) in the 3'-UTR of target mRNAs. Acts cooperatively with cribp to stabilize AU-rich sequence (ARE)-containing mRNAs. May play a role during gastrulation. Required for the vegetal localization of vg1 mRNA. The polypeptide is ELAV-like protein 1 (Xenopus tropicalis (Western clawed frog)).